The sequence spans 101 residues: MSRRCELTGIGPMVGHNVSHSNIKTKRRFLPALSPASLQSDSLGQTFKLRISNAALRTLDFRGGLDVFLLGAKDEQLSPRALKIKAQVKAKAKAAATAVAA.

Belongs to the bacterial ribosomal protein bL28 family.

The sequence is that of Large ribosomal subunit protein bL28 from Caulobacter sp. (strain K31).